The chain runs to 267 residues: Dihydropteroate synthase (267 aa).

The region spanning 1–251 (MTKTKIMGIL…NVELNAKLAK (251 aa)) is the Pterin-binding domain. Asn-11 provides a ligand contact to Mg(2+). (7,8-dihydropterin-6-yl)methyl diphosphate-binding positions include Thr-51, Asp-84, Asn-103, Asp-167, Lys-203, and 239-241 (RVH).

It belongs to the DHPS family. Homodimer. The cofactor is Mg(2+).

It carries out the reaction (7,8-dihydropterin-6-yl)methyl diphosphate + 4-aminobenzoate = 7,8-dihydropteroate + diphosphate. Its pathway is cofactor biosynthesis; tetrahydrofolate biosynthesis; 7,8-dihydrofolate from 2-amino-4-hydroxy-6-hydroxymethyl-7,8-dihydropteridine diphosphate and 4-aminobenzoate: step 1/2. Catalyzes the condensation of para-aminobenzoate (pABA) with 6-hydroxymethyl-7,8-dihydropterin diphosphate (DHPt-PP) to form 7,8-dihydropteroate (H2Pte), the immediate precursor of folate derivatives. The polypeptide is Dihydropteroate synthase (folP) (Staphylococcus aureus (strain Mu50 / ATCC 700699)).